A 98-amino-acid polypeptide reads, in one-letter code: UPF0251 protein Sputcn32_0687 (98 aa).

Belongs to the UPF0251 family.

The protein is UPF0251 protein Sputcn32_0687 of Shewanella putrefaciens (strain CN-32 / ATCC BAA-453).